Reading from the N-terminus, the 44-residue chain is Conotoxin S5.1 (44 aa).

Contains 3 disulfide bonds. Expressed by the venom duct.

It localises to the secreted. The sequence is that of Conotoxin S5.1 from Conus striatus (Striated cone).